Here is a 230-residue protein sequence, read N- to C-terminus: Ribosomal RNA large subunit methyltransferase E (230 aa).

Over residues 1 to 13 the composition is skewed to gly residues; it reads MSGSGGKGGGRGG. The segment at 1 to 22 is disordered; that stretch reads MSGSGGKGGGRGGLHVRVKTAK. Residues Gly-81, Trp-83, Asp-100, Asp-116, and Asp-140 each coordinate S-adenosyl-L-methionine. Catalysis depends on Lys-180, which acts as the Proton acceptor.

It belongs to the class I-like SAM-binding methyltransferase superfamily. RNA methyltransferase RlmE family.

It localises to the cytoplasm. The enzyme catalyses uridine(2552) in 23S rRNA + S-adenosyl-L-methionine = 2'-O-methyluridine(2552) in 23S rRNA + S-adenosyl-L-homocysteine + H(+). In terms of biological role, specifically methylates the uridine in position 2552 of 23S rRNA at the 2'-O position of the ribose in the fully assembled 50S ribosomal subunit. This Sphingopyxis alaskensis (strain DSM 13593 / LMG 18877 / RB2256) (Sphingomonas alaskensis) protein is Ribosomal RNA large subunit methyltransferase E.